The following is a 371-amino-acid chain: Leu/Ile/Val-binding protein homolog 1 (371 aa).

A signal peptide spans 1-23 (MRKTLFSGVALAAVIAFGGSAWA).

Belongs to the leucine-binding protein family.

Functionally, component of an amino-acid transport system. The protein is Leu/Ile/Val-binding protein homolog 1 of Brucella suis biovar 1 (strain 1330).